The chain runs to 171 residues: Ribulose bisphosphate carboxylase small subunit, chloroplastic (171 aa).

A chloroplast-targeting transit peptide spans 1–50 (MATGAGAGAATVVSAFTGLKSTAQFPSSFKMSNAAAEWEQKTTSNGGRVR).

It belongs to the RuBisCO small chain family. Heterohexadecamer of 8 large and 8 small subunits.

It is found in the plastid. The protein resides in the chloroplast. RuBisCO catalyzes two reactions: the carboxylation of D-ribulose 1,5-bisphosphate, the primary event in carbon dioxide fixation, as well as the oxidative fragmentation of the pentose substrate. Both reactions occur simultaneously and in competition at the same active site. Although the small subunit is not catalytic it is essential for maximal activity. This chain is Ribulose bisphosphate carboxylase small subunit, chloroplastic, found in Pinus thunbergii (Japanese black pine).